Consider the following 40-residue polypeptide: MANTTGRIPLWLIGTVVGTPVISLVGIFSYGSYSGLGSSL.

A helical transmembrane segment spans residues 8–28; the sequence is IPLWLIGTVVGTPVISLVGIF.

Belongs to the PsbJ family. In terms of assembly, PSII is composed of 1 copy each of membrane proteins PsbA, PsbB, PsbC, PsbD, PsbE, PsbF, PsbH, PsbI, PsbJ, PsbK, PsbL, PsbM, PsbT, PsbX, PsbY, PsbZ, Psb30/Ycf12, at least 3 peripheral proteins of the oxygen-evolving complex and a large number of cofactors. It forms dimeric complexes.

The protein localises to the plastid. The protein resides in the chloroplast thylakoid membrane. Functionally, one of the components of the core complex of photosystem II (PSII). PSII is a light-driven water:plastoquinone oxidoreductase that uses light energy to abstract electrons from H(2)O, generating O(2) and a proton gradient subsequently used for ATP formation. It consists of a core antenna complex that captures photons, and an electron transfer chain that converts photonic excitation into a charge separation. The sequence is that of Photosystem II reaction center protein J from Huperzia lucidula (Shining clubmoss).